The following is a 233-amino-acid chain: 2,3,4,5-tetrahydropyridine-2,6-dicarboxylate N-acetyltransferase (233 aa).

Belongs to the transferase hexapeptide repeat family. DapH subfamily.

The enzyme catalyses (S)-2,3,4,5-tetrahydrodipicolinate + acetyl-CoA + H2O = L-2-acetamido-6-oxoheptanedioate + CoA. It participates in amino-acid biosynthesis; L-lysine biosynthesis via DAP pathway; LL-2,6-diaminopimelate from (S)-tetrahydrodipicolinate (acetylase route): step 1/3. In terms of biological role, catalyzes the transfer of an acetyl group from acetyl-CoA to tetrahydrodipicolinate. This Oenococcus oeni (strain ATCC BAA-331 / PSU-1) protein is 2,3,4,5-tetrahydropyridine-2,6-dicarboxylate N-acetyltransferase.